Reading from the N-terminus, the 197-residue chain is MAKIRDPRFKLSRRLGVNIYGHPKAMKRATRENSREGKKLSNYGKQLLEKQKIRSYYGVLEKQFLRYVKKAMKSKERTGDVLLRSLECRLDNIAYRIGFANSIRQARQMVNHGHILVNGSKVNIPSYEVKAGDVITLREKYRKNDEFADNFLSLKKFSLPYIEKDYDKFSGVLIKEPERDEIPIDANETLVVELYSK.

Residues 88–151 enclose the S4 RNA-binding domain; the sequence is CRLDNIAYRI…RKNDEFADNF (64 aa).

Belongs to the universal ribosomal protein uS4 family. As to quaternary structure, part of the 30S ribosomal subunit. Contacts protein S5. The interaction surface between S4 and S5 is involved in control of translational fidelity.

Its function is as follows. One of the primary rRNA binding proteins, it binds directly to 16S rRNA where it nucleates assembly of the body of the 30S subunit. Functionally, with S5 and S12 plays an important role in translational accuracy. The polypeptide is Small ribosomal subunit protein uS4B (Clostridium botulinum (strain Langeland / NCTC 10281 / Type F)).